A 738-amino-acid polypeptide reads, in one-letter code: Protostadienol synthase A (738 aa).

A PFTB 1 repeat occupies Lys-132 to Gly-173. The active-site Proton donor is the Asp-463. 3 PFTB repeats span residues Leu-490–Val-531, Val-567–Gly-607, and Cys-616–Gly-663.

Belongs to the terpene cyclase/mutase family.

The enzyme catalyses (S)-2,3-epoxysqualene = (17Z)-protosta-17(20),24-dien-3beta-ol. In terms of biological role, protostadienol synthase which cyclizes (3S)-oxidosqualene to (17Z)-protosta-17(20),24-dien-3-beta-ol (protostadienol), the biosynthetic precursor of helvolic acid, a secondary metabolite which promotes virulence. The polypeptide is Protostadienol synthase A (pdsA) (Neosartorya fischeri (strain ATCC 1020 / DSM 3700 / CBS 544.65 / FGSC A1164 / JCM 1740 / NRRL 181 / WB 181) (Aspergillus fischerianus)).